The primary structure comprises 238 residues: Lactate utilization protein A (238 aa).

This sequence belongs to the LutA/YkgE family.

Is involved in L-lactate degradation and allows cells to grow with lactate as the sole carbon source. The polypeptide is Lactate utilization protein A (Bacillus pumilus (strain SAFR-032)).